Consider the following 500-residue polypeptide: Na(+)/H(+) antiporter NhaB (500 aa).

Transmembrane regions (helical) follow at residues 23-43 (VVIC…GPVA), 53-73 (IFTL…LLLI), 96-116 (VILL…LLLF), 129-149 (AILA…LDAL), 150-170 (TVTA…HRVA), 205-225 (LLMH…VGEP), 238-258 (FVDF…AGLV), 311-331 (ILII…LMVI), 350-370 (FQDA…VAVI), 450-470 (ATPN…APLI), and 477-497 (MVWM…WAVT).

This sequence belongs to the NhaB Na(+)/H(+) (TC 2.A.34) antiporter family.

Its subcellular location is the cell inner membrane. It carries out the reaction 2 Na(+)(in) + 3 H(+)(out) = 2 Na(+)(out) + 3 H(+)(in). Functionally, na(+)/H(+) antiporter that extrudes sodium in exchange for external protons. This chain is Na(+)/H(+) antiporter NhaB, found in Pseudomonas putida (strain ATCC 47054 / DSM 6125 / CFBP 8728 / NCIMB 11950 / KT2440).